Consider the following 439-residue polypeptide: Chaperone SurA (439 aa).

A signal peptide spans 1–27 (MRRISSRLSLVLFAALSCATALFPAHA). PpiC domains are found at residues 180–281 (GEEF…KLLD) and 293–391 (LEQT…QVEA).

The protein localises to the periplasm. It catalyses the reaction [protein]-peptidylproline (omega=180) = [protein]-peptidylproline (omega=0). Functionally, chaperone involved in the correct folding and assembly of outer membrane proteins. Recognizes specific patterns of aromatic residues and the orientation of their side chains, which are found more frequently in integral outer membrane proteins. May act in both early periplasmic and late outer membrane-associated steps of protein maturation. The sequence is that of Chaperone SurA from Aromatoleum aromaticum (strain DSM 19018 / LMG 30748 / EbN1) (Azoarcus sp. (strain EbN1)).